The following is a 2094-amino-acid chain: Non-reducing polyketide synthase ustP (2094 aa).

The segment at 9–243 (VFGDLSVPYH…GKIQVGGLFH (235 aa)) is N-terminal acylcarrier protein transacylase (SAT) domain. Residues 357-377 (NTAGVDSSSRGSGHADAEKQP) are disordered. Residues 379–813 (RSKIAIIGFS…GGNSSVLVED (435 aa)) form the Ketosynthase family 3 (KS3) domain. Catalysis depends on for beta-ketoacyl synthase activity residues Cys-551, His-686, and His-727. Positions 914–1227 (FSFTGQGSQY…EDDCKIFTPA (314 aa)) are malonyl-CoA:ACP transacylase (MAT) domain. Ser-1004 functions as the For acyl/malonyl transferase activity in the catalytic mechanism. Positions 1305–1629 (TTSVQYITAE…QRKVLDLVLP (325 aa)) are product template (PT) domain. The tract at residues 1308–1445 (VQYITAESYG…CSGFFTDKSR (138 aa)) is N-terminal hotdog fold. Positions 1308 to 1625 (VQYITAESYG…FAAVQRKVLD (318 aa)) constitute a PKS/mFAS DH domain. His-1341 functions as the Proton acceptor; for dehydratase activity in the catalytic mechanism. The C-terminal hotdog fold stretch occupies residues 1473-1625 (GSVHMIKTGM…FAAVQRKVLD (153 aa)). Asp-1536 functions as the Proton donor; for dehydratase activity in the catalytic mechanism. Low complexity predominate over residues 1644 to 1671 (AAAAPSQRQQQQQQQQQQQPAQPVAASQ). A disordered region spans residues 1644 to 1689 (AAAAPSQRQQQQQQQQQQQPAQPVAASQESGMDDMPPTLVPSEKKD). Residues 1689-1763 (DVPSEKLKVI…ELVRHILGSS (75 aa)) enclose the Carrier domain. Position 1723 is an O-(pantetheine 4'-phosphoryl)serine (Ser-1723). Polar residues predominate over residues 1762–1778 (SSTPSSDSGPATPSITP). Residues 1762-1782 (SSTPSSDSGPATPSITPLQEP) are disordered. The segment at 1844 to 2069 (KVWLFPDGSG…GVVEGAHHFS (226 aa)) is claisen cyclase domain. Catalysis depends on Ser-1916, which acts as the For Claisen cyclase activity.

It catalyses the reaction 6 malonyl-CoA + acetyl-CoA + 6 H(+) = naphtopyrone YWA1 + 6 CO2 + 7 CoA + H2O. It functions in the pathway secondary metabolite biosynthesis. In terms of biological role, non-reducing polyketide synthase; part of the gene cluster that mediates the biosynthesis of ustilaginoidins, dimeric gamma-naphthopyrones isolated from different fungal species. The first step in the biosynthesis of ustilaginoidins is the production of gamma-naphthopyrone precursor YWA1 by the non-reducing polyketide synthase ustP, via condensation of one acetyl-CoA starter unit with 6 malonyl-CoA units. YWA1 is then probably substrate of the ustZ to yield norrubrofusarin via a dehydration reaction. A key enzyme in the biosynthetic pathway is the laccase ustL, which catalyzes the oxidative dimerization of norrubrofusarin to ustilaginoidin A. It can produce the M- and P-atropisomers in varying amounts, depending on the reaction conditions. For the biosynthesis of 3-methylustilaginoid in derivatives such as chaetochromin A, a methylated derivative of YWA1 is required. The C-methylation is considered to be catalyzed by ustM, the phosphopantetheine attachment site of which indicates that it acts on the growing polyketide chain before release of the product. For the biosynthesis of chaetochromin A, it is assumed that saturation of the D2 double bond takes place before dimerization, and is probably catalyzed by an external reductase because no candidate gene was identified within the cluster. In Ustilaginoidea virens (Rice false smut fungus), this protein is Non-reducing polyketide synthase ustP.